The primary structure comprises 250 residues: MLTFIGLGLYDKTDVSEKGLAMIRSADYVFLEGYTSRLMGTNITELEAFYKKPVRLLLRADVEQHPDELLDCAARGNTVFLCAGDPMVSTTHADLRIRAAERGIPTAIIHGSSIVSAVCGLSGLQNYRFGKSCSVPFPQGNWAPSSPLDVILENRTNRLHTLVYLDIQDDRYMTVNEGICLLEAMAQKKQVAIPFYVGVARAGSETSLVRAGTAETLRSADFGPPLHILIVPGELHDMEREYLARFAGLC.

S-adenosyl-L-methionine contacts are provided by residues Leu9, Asp85, Val88, 113 to 114 (SI), Leu165, Ala202, and His227.

Belongs to the diphthine synthase family. Homodimer.

It catalyses the reaction 2-[(3S)-amino-3-carboxypropyl]-L-histidyl-[translation elongation factor 2] + 3 S-adenosyl-L-methionine = diphthine-[translation elongation factor 2] + 3 S-adenosyl-L-homocysteine + 3 H(+). It functions in the pathway protein modification; peptidyl-diphthamide biosynthesis. S-adenosyl-L-methionine-dependent methyltransferase that catalyzes the trimethylation of the amino group of the modified target histidine residue in translation elongation factor 2 (EF-2), to form an intermediate called diphthine. The three successive methylation reactions represent the second step of diphthamide biosynthesis. This is Diphthine synthase from Methanoregula boonei (strain DSM 21154 / JCM 14090 / 6A8).